The sequence spans 124 residues: Small ribosomal subunit protein uS12 (124 aa).

Position 89 is a 3-methylthioaspartic acid (aspartate 89). The tract at residues 104–124 is disordered; that stretch reads TQGVKNRGQARSRYGAKKEKK. Residues 111-124 are compositionally biased toward basic residues; that stretch reads GQARSRYGAKKEKK.

The protein belongs to the universal ribosomal protein uS12 family. In terms of assembly, part of the 30S ribosomal subunit. Contacts proteins S8 and S17. May interact with IF1 in the 30S initiation complex.

Its function is as follows. With S4 and S5 plays an important role in translational accuracy. Functionally, interacts with and stabilizes bases of the 16S rRNA that are involved in tRNA selection in the A site and with the mRNA backbone. Located at the interface of the 30S and 50S subunits, it traverses the body of the 30S subunit contacting proteins on the other side and probably holding the rRNA structure together. The combined cluster of proteins S8, S12 and S17 appears to hold together the shoulder and platform of the 30S subunit. This is Small ribosomal subunit protein uS12 from Micrococcus luteus (strain ATCC 4698 / DSM 20030 / JCM 1464 / CCM 169 / CCUG 5858 / IAM 1056 / NBRC 3333 / NCIMB 9278 / NCTC 2665 / VKM Ac-2230) (Micrococcus lysodeikticus).